Here is a 160-residue protein sequence, read N- to C-terminus: SsrA-binding protein (160 aa).

Residues Leu-130–Val-160 are disordered. The span at Lys-139–Arg-150 shows a compositional bias: basic and acidic residues. The segment covering Gln-151–Val-160 has biased composition (basic residues).

It belongs to the SmpB family.

It is found in the cytoplasm. Its function is as follows. Required for rescue of stalled ribosomes mediated by trans-translation. Binds to transfer-messenger RNA (tmRNA), required for stable association of tmRNA with ribosomes. tmRNA and SmpB together mimic tRNA shape, replacing the anticodon stem-loop with SmpB. tmRNA is encoded by the ssrA gene; the 2 termini fold to resemble tRNA(Ala) and it encodes a 'tag peptide', a short internal open reading frame. During trans-translation Ala-aminoacylated tmRNA acts like a tRNA, entering the A-site of stalled ribosomes, displacing the stalled mRNA. The ribosome then switches to translate the ORF on the tmRNA; the nascent peptide is terminated with the 'tag peptide' encoded by the tmRNA and targeted for degradation. The ribosome is freed to recommence translation, which seems to be the essential function of trans-translation. The protein is SsrA-binding protein of Alkalilimnicola ehrlichii (strain ATCC BAA-1101 / DSM 17681 / MLHE-1).